We begin with the raw amino-acid sequence, 817 residues long: MDNQYQPKEIEAEAQAYWEQQQTFQAREDSARPKYYCLSMFPYPSGRLHMGHVRNYTIGDVVSRYKRMQGYNVLQPMGWDAFGLPAENAAMERGVPPAAWTRENIGAMREQLKGLGFGYDWSRELATCDPEYYRWEQWLFIRLYRKGLVYRDTAAVNWDPVDQTVLANEQVIEGRGWRSGALVERREIPQWFLRITDYADELLEALDELDGWPEQVRNMQRNWIGRSEGVELSFDLAGRDEQLTVFTTRPDTLYGVTYMGLAPEHPISLELAEHHPAIAELVEEARSGGTAEADLATREKRGADTGLEAIHPLTGERIPVWVANFVLMEYGSGAVMAVPAHDQRDWEFASTYGLPIRPVVHPADGTELDIAAGAFSDYGVLADSGPFSGMPSDRAFAAIAERLEAEGRGQRRVQYRLRDWGVSRQRYWGAPIPMIHCADCGPVPVPDDQLPVTLPEDVEISGGGSPLKSMPAFYQTACPQCGADAERETDTFDTFMESSWYFARFACADQDGAMLDERADHWTPVDQYIGGIEHAVLHLLYARFYHKVLRDEGLVSSDEPFTRLLTQGMVLKDGTKMSKSKGNTVDPQELVDRFGADTVRLFTMFAAPPDQSLEWSDSGVEGAYRFLRRLHGLVRDHVAAGPAPALDPQALSDTQRDLRRKVHETIAKASDDVGKRLTFNTAIAAVMELCNALGKAQDDSAAGRAVMQEGLEAAVLILAPITPHLCHHLWFQLGHTAPVVEAPWPEADKQALVRDEVELVVQVNGKLRGHVTLPADADQQQAQEAALAEHNVQRFVADKEIKKVVFVPGKLINVVAK.

The 'HIGH' region signature appears at 42–52 (PYPSGRLHMGH). A 'KMSKS' region motif is present at residues 576–580 (KMSKS). Position 579 (Lys579) interacts with ATP.

This sequence belongs to the class-I aminoacyl-tRNA synthetase family.

The protein localises to the cytoplasm. It catalyses the reaction tRNA(Leu) + L-leucine + ATP = L-leucyl-tRNA(Leu) + AMP + diphosphate. The sequence is that of Leucine--tRNA ligase from Halorhodospira halophila (strain DSM 244 / SL1) (Ectothiorhodospira halophila (strain DSM 244 / SL1)).